The chain runs to 408 residues: Aurora kinase A-B (408 aa).

A compositionally biased stretch (basic and acidic residues) spans 1–10 (MERAVKENHK). Residues 1–128 (MERAVKENHK…QGKTLAVPKE (128 aa)) are disordered. The segment covering 85–110 (GHQTSKPQGPNENRNPQQTSHSSTPN) has biased composition (polar residues). Positions 140 to 390 (FEIGRPLGKG…LKGVLEHPWI (251 aa)) constitute a Protein kinase domain. ATP is bound by residues lysine 150, lysine 169, and 217–220 (LDYA). Catalysis depends on aspartate 263, which acts as the Proton acceptor. Position 281 (aspartate 281) interacts with ATP. The interval 287 to 300 (HAPSSRRTTLCGTL) is activation segment.

It belongs to the protein kinase superfamily. Ser/Thr protein kinase family. Aurora subfamily. As to quaternary structure, interacts with kif2c and kif11. Phosphorylated. Autophosphorylated on a serine residue.

It localises to the cytoplasm. Its subcellular location is the cytoskeleton. It is found in the spindle pole. The protein localises to the microtubule organizing center. The protein resides in the centrosome. It catalyses the reaction L-seryl-[protein] + ATP = O-phospho-L-seryl-[protein] + ADP + H(+). The enzyme catalyses L-threonyl-[protein] + ATP = O-phospho-L-threonyl-[protein] + ADP + H(+). Functionally, mitotic serine/threonine kinases that contributes to the regulation of cell cycle progression. Associates with the centrosome and the spindle microtubules during mitosis and plays a critical role in various mitotic events including the establishment of mitotic spindle, centrosome duplication, centrosome separation as well as maturation, chromosomal alignment, spindle assembly checkpoint, and cytokinesis. Phosphorylates numerous target proteins. Important for microtubule formation and/or stabilization. In Xenopus laevis (African clawed frog), this protein is Aurora kinase A-B (aurka-b).